The primary structure comprises 81 residues: MNPLIASASVIAAGLAVGLASIGPGIGQGTAAGQAVEGIARQPEVDGKIRGTLLLSLAFMEALTIYGLVVALALLFANPFV.

Transmembrane regions (helical) follow at residues proline 3 to glycine 23 and leucine 57 to alanine 77.

The protein belongs to the ATPase C chain family. F-type ATPases have 2 components, F(1) - the catalytic core - and F(0) - the membrane proton channel. F(1) has five subunits: alpha(3), beta(3), gamma(1), delta(1), epsilon(1). F(0) has four main subunits: a(1), b(1), b'(1) and c(10-14). The alpha and beta chains form an alternating ring which encloses part of the gamma chain. F(1) is attached to F(0) by a central stalk formed by the gamma and epsilon chains, while a peripheral stalk is formed by the delta, b and b' chains.

It localises to the plastid. Its subcellular location is the chloroplast thylakoid membrane. Functionally, f(1)F(0) ATP synthase produces ATP from ADP in the presence of a proton or sodium gradient. F-type ATPases consist of two structural domains, F(1) containing the extramembraneous catalytic core and F(0) containing the membrane proton channel, linked together by a central stalk and a peripheral stalk. During catalysis, ATP synthesis in the catalytic domain of F(1) is coupled via a rotary mechanism of the central stalk subunits to proton translocation. Key component of the F(0) channel; it plays a direct role in translocation across the membrane. A homomeric c-ring of between 10-14 subunits forms the central stalk rotor element with the F(1) delta and epsilon subunits. This chain is ATP synthase subunit c, chloroplastic, found in Chaetosphaeridium globosum (Charophycean green alga).